We begin with the raw amino-acid sequence, 422 residues long: Serine protease HTRA2, mitochondrial (422 aa).

Residues 1-17 (MALRGCHRLEVIFKRCI) constitute a mitochondrion transit peptide. Residues 18–74 (ASPVLHSQAGNRRSSQLAIKGVDPNSNGNSGQYQQNGEHKEKGWRRLVRFFVPFSLG) constitute a propeptide that is removed on maturation. Residues 33 to 55 (QLAIKGVDPNSNGNSGQYQQNGE) form a disordered region. Over residues 42–53 (NSNGNSGQYQQN) the composition is skewed to low complexity. The helical transmembrane segment at 64-82 (LVRFFVPFSLGAAVSAAII) threads the bilayer. 2 short sequence motifs (IAP-binding) span residues 75-78 (AAVS) and 94-97 (SKMT). A serine protease region spans residues 139–302 (SNGSGFIIEQ…IPIDYVKVFL (164 aa)). Residues His-157, Asp-189, and Ser-266 each act as charge relay system in the active site. The PDZ domain maps to 325-410 (MGITMLTLTP…TLDIVILRGV (86 aa)).

This sequence belongs to the peptidase S1C family. In terms of assembly, interacts with th/DIAP1 (via BIR 2 domain).

The protein localises to the mitochondrion intermembrane space. Its subcellular location is the mitochondrion membrane. The enzyme catalyses Cleavage of non-polar aliphatic amino-acids at the P1 position, with a preference for Val, Ile and Met. At the P2 and P3 positions, Arg is selected most strongly with a secondary preference for other hydrophilic residues.. In terms of biological role, serine protease that shows proteolytic activity against a non-specific substrate beta-casein. Promotes or induces cell death either by direct binding to and inhibition of BIRC proteins (also called inhibitor of apoptosis proteins, IAPs), leading to an increase in caspase activity, or by a BIRC inhibition-independent, caspase-independent and serine protease activity-dependent mechanism. Can antagonize antiapoptotic activity of th/Diap1 by directly inducing the degradation of th/Diap1. This Drosophila simulans (Fruit fly) protein is Serine protease HTRA2, mitochondrial.